A 179-amino-acid chain; its full sequence is Bifunctional protein PyrR (179 aa).

Residues 97–109 (VILIDDVLFTGRT) carry the PRPP-binding motif.

This sequence belongs to the purine/pyrimidine phosphoribosyltransferase family. PyrR subfamily.

It catalyses the reaction UMP + diphosphate = 5-phospho-alpha-D-ribose 1-diphosphate + uracil. Regulates the transcription of the pyrimidine nucleotide (pyr) operon in response to exogenous pyrimidines. In terms of biological role, also displays a weak uracil phosphoribosyltransferase activity which is not physiologically significant. The sequence is that of Bifunctional protein PyrR from Actinobacillus pleuropneumoniae serotype 5b (strain L20).